Here is a 365-residue protein sequence, read N- to C-terminus: Protein YIM1 (365 aa).

This sequence belongs to the YIM1 family.

The protein resides in the lipid droplet. Its subcellular location is the mitochondrion. The sequence is that of Protein YIM1 (YIM1) from Saccharomyces cerevisiae (strain RM11-1a) (Baker's yeast).